The following is an 85-amino-acid chain: Large ribosomal subunit protein bL31 (85 aa).

Positions 65–85 (YGMGGAGKAGEDKKAGDKADA) are disordered. Residues 73–85 (AGEDKKAGDKADA) show a composition bias toward basic and acidic residues.

The protein belongs to the bacterial ribosomal protein bL31 family. Type A subfamily. Part of the 50S ribosomal subunit.

In terms of biological role, binds the 23S rRNA. In Synechococcus sp. (strain WH7803), this protein is Large ribosomal subunit protein bL31.